The primary structure comprises 159 residues: SsrA-binding protein (159 aa).

Belongs to the SmpB family.

The protein resides in the cytoplasm. In terms of biological role, required for rescue of stalled ribosomes mediated by trans-translation. Binds to transfer-messenger RNA (tmRNA), required for stable association of tmRNA with ribosomes. tmRNA and SmpB together mimic tRNA shape, replacing the anticodon stem-loop with SmpB. tmRNA is encoded by the ssrA gene; the 2 termini fold to resemble tRNA(Ala) and it encodes a 'tag peptide', a short internal open reading frame. During trans-translation Ala-aminoacylated tmRNA acts like a tRNA, entering the A-site of stalled ribosomes, displacing the stalled mRNA. The ribosome then switches to translate the ORF on the tmRNA; the nascent peptide is terminated with the 'tag peptide' encoded by the tmRNA and targeted for degradation. The ribosome is freed to recommence translation, which seems to be the essential function of trans-translation. This Coxiella burnetii (strain CbuK_Q154) (Coxiella burnetii (strain Q154)) protein is SsrA-binding protein.